Here is a 461-residue protein sequence, read N- to C-terminus: Glycogen synthase (461 aa).

Residue lysine 15 participates in ADP-alpha-D-glucose binding.

This sequence belongs to the glycosyltransferase 1 family. Bacterial/plant glycogen synthase subfamily.

The catalysed reaction is [(1-&gt;4)-alpha-D-glucosyl](n) + ADP-alpha-D-glucose = [(1-&gt;4)-alpha-D-glucosyl](n+1) + ADP + H(+). Its pathway is glycan biosynthesis; glycogen biosynthesis. In terms of biological role, synthesizes alpha-1,4-glucan chains using ADP-glucose. The chain is Glycogen synthase from Fusobacterium nucleatum subsp. nucleatum (strain ATCC 25586 / DSM 15643 / BCRC 10681 / CIP 101130 / JCM 8532 / KCTC 2640 / LMG 13131 / VPI 4355).